Consider the following 111-residue polypeptide: Ig kappa chain V-III region PC 7175 (111 aa).

The interval 1–23 (DIVLTQSPASLAVSLGQRATISC) is framework-1. An intrachain disulfide couples Cys-23 to Cys-92. The complementarity-determining-1 stretch occupies residues 24-38 (RASKSVSTSGYSYMH). The framework-2 stretch occupies residues 39–53 (WYQQKPGQPPKLLIY). The tract at residues 54 to 60 (LASNLES) is complementarity-determining-2. Residues 61–92 (GVPARFSGSGSGTDFTLNIHPVEEEDAATYYC) form a framework-3 region. Positions 93-101 (QHSRELPLT) are complementarity-determining-3. A framework-4 region spans residues 102–111 (FGAGTKLELK).

The protein is Ig kappa chain V-III region PC 7175 of Mus musculus (Mouse).